A 659-amino-acid polypeptide reads, in one-letter code: A-type ATP synthase subunit I (659 aa).

8 helical membrane passes run 376 to 396 (FFFGFMLTDFVYGLLLGVISA), 415 to 435 (IMLWASAFTMVLGILFGSYCG), 460 to 480 (VMALAIGLGHLFTGYILGFIV), 489 to 509 (AAILEQLPWVFIIIGITLFAL), 513 to 533 (LGIPQIAFKAVFGVGLALFVV), 542 to 562 (MAVLLTISDFFGFIGNWLSYA), 566 to 586 (ALALATSGIALVINIIANMVW), and 590 to 610 (IGPIPLGILIGIVILIGGHIF).

The protein belongs to the V-ATPase 116 kDa subunit family. Has multiple subunits with at least A(3), B(3), C, D, E, F, H, I and proteolipid K(x).

The protein resides in the cell membrane. In terms of biological role, component of the A-type ATP synthase that produces ATP from ADP in the presence of a proton gradient across the membrane. This chain is A-type ATP synthase subunit I, found in Pyrococcus abyssi (strain GE5 / Orsay).